We begin with the raw amino-acid sequence, 258 residues long: Small ribosomal subunit protein mS35 (258 aa).

A mitochondrion-targeting transit peptide spans 1-39 (MAFNPLLSLLKADAIFLGQLSKSSFCATSRAFSVFYFTR).

This sequence belongs to the mitochondrion-specific ribosomal protein mS35 family. In terms of assembly, component of the mitochondrial small ribosomal subunit (mt-SSU). Mature yeast 74S mitochondrial ribosomes consist of a small (37S) and a large (54S) subunit. The 37S small subunit contains a 15S ribosomal RNA (15S mt-rRNA) and at least 32 different proteins. The 54S large subunit contains a 21S rRNA (21S mt-rRNA) and at least 45 different proteins.

The protein resides in the mitochondrion. In terms of biological role, component of the mitochondrial ribosome (mitoribosome), a dedicated translation machinery responsible for the synthesis of mitochondrial genome-encoded proteins, including at least some of the essential transmembrane subunits of the mitochondrial respiratory chain. The mitoribosomes are attached to the mitochondrial inner membrane and translation products are cotranslationally integrated into the membrane. The chain is Small ribosomal subunit protein mS35 (rsm24) from Schizosaccharomyces pombe (strain 972 / ATCC 24843) (Fission yeast).